The chain runs to 901 residues: Quinate repressor protein (901 aa).

Residues 1–88 (MSILVRPPKR…DSLQTRRKFP (88 aa)) form a sufficient for repression region. Disordered stretches follow at residues 26–59 (LRDFGQGNSASTPINTSADYGRFDERPGSGDGSR) and 878–901 (EEQGEEYDQSAMRTRLENLDGQPM). Residues 31 to 43 (QGNSASTPINTSA) are compositionally biased toward polar residues.

This sequence in the N-terminal section; belongs to the shikimate kinase family. The protein in the 2nd section; belongs to the type-I 3-dehydroquinase family. It in the C-terminal section; belongs to the shikimate dehydrogenase family. As to quaternary structure, interacts with qutA; transcriptional activator of the quinate utilization pathway genes.

Multi-domain repressor protein that negatively regulates transcription of the quinate utilization pathway genes. May mediate its repressor activity by binding directly to the qutA activator protein. In Emericella nidulans (strain FGSC A4 / ATCC 38163 / CBS 112.46 / NRRL 194 / M139) (Aspergillus nidulans), this protein is Quinate repressor protein (qutR).